The primary structure comprises 367 residues: Type II methyltransferase M.CviJI (367 aa).

An SAM-dependent MTase C5-type domain is found at 3–367 (FRTLELFAGI…EYLGYLVQYD (365 aa)). The active site involves Cys-73.

Belongs to the class I-like SAM-binding methyltransferase superfamily. C5-methyltransferase family.

It catalyses the reaction a 2'-deoxycytidine in DNA + S-adenosyl-L-methionine = a 5-methyl-2'-deoxycytidine in DNA + S-adenosyl-L-homocysteine + H(+). Functionally, a methylase that recognizes the double-stranded sequence 5'-RGCY-3', methylates C-3 on both strands, and protects the DNA from cleavage by the CviJI endonuclease. This Chlorella (PBCV-IL3A) protein is Type II methyltransferase M.CviJI.